The primary structure comprises 459 residues: uncharacterized protein (459 aa).

The TRAM domain maps to 2-60; the sequence is NLRVKQKIPLKIKRMGINGEGIGFYKRTLVFVPGALKGEEIFCQITSVKHNFVQARLLT. Residues Cys73, Cys79, Cys82, and Cys162 each contribute to the [4Fe-4S] cluster site. Positions 284, 313, 334, and 382 each coordinate S-adenosyl-L-methionine. The Nucleophile role is filled by Cys409.

It belongs to the class I-like SAM-binding methyltransferase superfamily. RNA M5U methyltransferase family.

This is an uncharacterized protein from Streptococcus mutans serotype c (strain ATCC 700610 / UA159).